Reading from the N-terminus, the 1609-residue chain is Laminin subunit gamma-1 (1609 aa).

An N-terminal signal peptide occupies residues 1 to 33 (MRGSHRAAPALRPRGRLWPVLAVLAAAAAAGCA). The Laminin N-terminal domain occupies 46–285 (RPQRCMPEFV…AISDFAVGGR (240 aa)). 2 N-linked (GlcNAc...) asparagine glycosylation sites follow: Asn-60 and Asn-134. 16 disulfide bridges follow: Cys-286–Cys-295, Cys-288–Cys-305, Cys-307–Cys-316, Cys-319–Cys-339, Cys-342–Cys-351, Cys-344–Cys-367, Cys-370–Cys-379, Cys-382–Cys-395, Cys-398–Cys-410, Cys-400–Cys-416, Cys-418–Cys-427, Cys-430–Cys-442, Cys-445–Cys-456, Cys-447–Cys-463, Cys-465–Cys-474, and Cys-477–Cys-492. Laminin EGF-like domains lie at 286–341 (CKCN…ECLP), 342–397 (CDCN…ACSS), 398–444 (CHCS…GCRP), and 445–494 (CSCD…GCTP). In terms of domain architecture, Laminin EGF-like 5; first part spans 495–504 (CFCFGHSSVC). One can recognise a Laminin IV type A domain in the interval 514–689 (SISSTFQIDE…PGVPATWVES (176 aa)). Asn-576 and Asn-650 each carry an N-linked (GlcNAc...) asparagine glycan. The region spanning 690-723 (CTCPVGYGGQFCEMCLSGYRRETPNLGPYSPCVL) is the Laminin EGF-like 5; second part domain. 24 disulfides stabilise this stretch: Cys-724–Cys-733, Cys-726–Cys-740, Cys-742–Cys-751, Cys-754–Cys-770, Cys-773–Cys-781, Cys-775–Cys-792, Cys-795–Cys-804, Cys-807–Cys-825, Cys-828–Cys-842, Cys-830–Cys-849, Cys-852–Cys-861, Cys-864–Cys-881, Cys-884–Cys-898, Cys-886–Cys-905, Cys-907–Cys-916, Cys-919–Cys-932, Cys-935–Cys-947, Cys-937–Cys-954, Cys-956–Cys-965, Cys-968–Cys-980, Cys-983–Cys-995, Cys-985–Cys-1001, Cys-1003–Cys-1012, and Cys-1015–Cys-1028. 6 consecutive Laminin EGF-like domains span residues 724 to 772 (CACN…DCQP), 773 to 827 (CPCP…LCRL), 828 to 883 (CQCS…KCKA), 884 to 934 (CNCN…GCER), 935 to 982 (CDCH…GCKP), and 983 to 1030 (CDCH…GCQE). 2 N-linked (GlcNAc...) asparagine glycosylation sites follow: Asn-1022 and Asn-1107. A domain II and I region spans residues 1030–1609 (ECPACYRLVK…CFNTPSIEKP (580 aa)). A coiled-coil region spans residues 1038–1609 (VKDKVADHRV…CFNTPSIEKP (572 aa)). Position 1149 is a phosphoserine; by FAM20C (Ser-1149). Residues Asn-1161, Asn-1175, Asn-1205, Asn-1223, Asn-1241, Asn-1380, Asn-1395, and Asn-1439 are each glycosylated (N-linked (GlcNAc...) asparagine). Phosphoserine is present on Ser-1493.

Laminin is a complex glycoprotein, consisting of three different polypeptide chains (alpha, beta, gamma), which are bound to each other by disulfide bonds into a cross-shaped molecule comprising one long and three short arms with globules at each end. Gamma-1 is a subunit of laminin-1 (laminin-111 or EHS laminin), laminin-2 (laminin-211 or merosin), laminin-3 (laminin-121 or S-laminin), laminin-4 (laminin-221 or S-merosin), laminin-6 (laminin-311 or K-laminin), laminin-7 (laminin-321 or KS-laminin), laminin-8 (laminin-411), laminin-9 (laminin-421), laminin-10 (laminin-511) and laminin-11 (laminin-521). Interacts with SVEP1. In terms of tissue distribution, found in the basement membranes (major component).

The protein resides in the secreted. It localises to the extracellular space. It is found in the extracellular matrix. The protein localises to the basement membrane. In terms of biological role, binding to cells via a high affinity receptor, laminin is thought to mediate the attachment, migration and organization of cells into tissues during embryonic development by interacting with other extracellular matrix components. In Homo sapiens (Human), this protein is Laminin subunit gamma-1.